The following is a 502-amino-acid chain: Keratin, type II cytoskeletal 8 (502 aa).

A head region spans residues 1 to 98 (MSVRSTKVTY…DPSIQQVRTE (98 aa)). Phosphoserine is present on residues Ser13, Ser26, Ser37, and Ser40. Residues 99-134 (EKEQIKTLNNKFASFIDKVRFLEQQNKMLETKWNLL) form a coil 1A region. The IF rod domain maps to 99-410 (EKEQIKTLNN…KLLEGEESRL (312 aa)). Positions 135-151 (QNQKTTRSNMDGMFEAY) are linker 1. The segment at 152–243 (ISNLRRQLDG…QLYEEELREM (92 aa)) is coil 1B. The linker 12 stretch occupies residues 244–267 (QSQISDTSVVLSMDNNRSLDLDGI). The interval 268 to 406 (IAEVRAQYED…ATYRKLLEGE (139 aa)) is coil 2. Residues 269-390 (AEVRAQYEDV…DYQELMNVKL (122 aa)) form a necessary for interaction with PNN region. The interval 407–502 (ESRLESGFQN…SESSDVFSKP (96 aa)) is tail. Ser425, Ser428, Ser436, and Ser444 each carry phosphoserine.

This sequence belongs to the intermediate filament family. As to quaternary structure, heterotetramer of two type I and two type II keratins. Keratin-8 associates with keratin-18. Expressed in oocytes, eggs, embryos, liver and intestinal mucosa.

The protein resides in the cytoplasm. It is found in the nucleus. It localises to the nucleoplasm. Its subcellular location is the nucleus matrix. In terms of biological role, together with KRT19, helps to link the contractile apparatus to dystrophin at the costameres of striated muscle. The protein is Keratin, type II cytoskeletal 8 of Xenopus laevis (African clawed frog).